Consider the following 167-residue polypeptide: MSTPARRRLMRDFKRMKEDSPPGVSASPLPDNVMVWNAMIIGPADTPYEDGTFRLLLEFDEDYPNKPPHVKFLSEMFHPNVYANGEICLDILQNRWTPTYDVASILTSIQSLFNDPNPASPANVEAATLFKDHKSQYIKRVKETVEKSWEDNMDDMDDSDEDDEDDE.

Residues 4–150 form the UBC core domain; that stretch reads PARRRLMRDF…VKETVEKSWE (147 aa). The active-site Glycyl thioester intermediate is cysteine 88. The segment at 148 to 167 is disordered; that stretch reads SWEDNMDDMDDSDEDDEDDE. Residues 151–167 show a composition bias toward acidic residues; sequence DNMDDMDDSDEDDEDDE.

It belongs to the ubiquitin-conjugating enzyme family.

It is found in the cytoplasm. Its subcellular location is the nucleus. The catalysed reaction is S-ubiquitinyl-[E1 ubiquitin-activating enzyme]-L-cysteine + [E2 ubiquitin-conjugating enzyme]-L-cysteine = [E1 ubiquitin-activating enzyme]-L-cysteine + S-ubiquitinyl-[E2 ubiquitin-conjugating enzyme]-L-cysteine.. The protein operates within protein modification; protein ubiquitination. Its function is as follows. Catalyzes the covalent attachment of ubiquitin to other proteins. Plays a role in transcription regulation by catalyzing the monoubiquitination of histone H2B to form H2BK123ub1. H2BK123ub1 gives a specific tag for epigenetic transcriptional activation and is also a prerequisite for H3K4me and H3K79me formation. Also involved in postreplication repair of UV-damaged DNA, in N-end rule-dependent protein degradation and in sporulation. The chain is Ubiquitin-conjugating enzyme E2 2 (UBC2) from Candida glabrata (strain ATCC 2001 / BCRC 20586 / JCM 3761 / NBRC 0622 / NRRL Y-65 / CBS 138) (Yeast).